Reading from the N-terminus, the 91-residue chain is Large ribosomal subunit protein bL27 (91 aa).

Belongs to the bacterial ribosomal protein bL27 family. As to quaternary structure, part of the 50S ribosomal subunit. Contacts protein L18.

In terms of biological role, binds the 5S and 23S rRNAs and also the tRNA in the P site. The protein is Large ribosomal subunit protein bL27 (rpmA) of Deinococcus radiodurans (strain ATCC 13939 / DSM 20539 / JCM 16871 / CCUG 27074 / LMG 4051 / NBRC 15346 / NCIMB 9279 / VKM B-1422 / R1).